A 132-amino-acid chain; its full sequence is Large ribosomal subunit protein bL12 (132 aa).

Belongs to the bacterial ribosomal protein bL12 family. As to quaternary structure, homodimer. Part of the ribosomal stalk of the 50S ribosomal subunit. Forms a multimeric L10(L12)X complex, where L10 forms an elongated spine to which 2 to 4 L12 dimers bind in a sequential fashion. Binds GTP-bound translation factors.

Functionally, forms part of the ribosomal stalk which helps the ribosome interact with GTP-bound translation factors. Is thus essential for accurate translation. In Prochlorococcus marinus (strain MIT 9211), this protein is Large ribosomal subunit protein bL12.